We begin with the raw amino-acid sequence, 247 residues long: Carboxy-S-adenosyl-L-methionine synthase (247 aa).

Residues tyrosine 39, 64 to 66, 89 to 90, 117 to 118, asparagine 132, and arginine 199 each bind S-adenosyl-L-methionine; these read GCS, DN, and DI.

The protein belongs to the class I-like SAM-binding methyltransferase superfamily. Cx-SAM synthase family. In terms of assembly, homodimer.

It catalyses the reaction prephenate + S-adenosyl-L-methionine = carboxy-S-adenosyl-L-methionine + 3-phenylpyruvate + H2O. Its function is as follows. Catalyzes the conversion of S-adenosyl-L-methionine (SAM) to carboxy-S-adenosyl-L-methionine (Cx-SAM). The polypeptide is Carboxy-S-adenosyl-L-methionine synthase (Salmonella enteritidis PT4 (strain P125109)).